A 187-amino-acid polypeptide reads, in one-letter code: Transcriptional repressor NrdR (187 aa).

Residues 3 to 34 (CPFCRHPDSRVVDSRTTDDGTSIRRRRQCPDC) fold into a zinc finger. The 91-residue stretch at 46–136 (LMVVKRSGVT…VYRAFDSLED (91 aa)) folds into the ATP-cone domain. Positions 146-187 (EEQRERPAVDDEDHEDAGAERQGTDRGSGGTVEVPVPATVAD) are disordered.

This sequence belongs to the NrdR family. Zn(2+) is required as a cofactor.

Its function is as follows. Negatively regulates transcription of bacterial ribonucleotide reductase nrd genes and operons by binding to NrdR-boxes. The sequence is that of Transcriptional repressor NrdR from Streptomyces avermitilis (strain ATCC 31267 / DSM 46492 / JCM 5070 / NBRC 14893 / NCIMB 12804 / NRRL 8165 / MA-4680).